Reading from the N-terminus, the 203-residue chain is Ribonuclease T (203 aa).

Residues 11-185 (VVVDVETGGF…YDTEKTAELF (175 aa)) form the Exonuclease domain. 4 residues coordinate Mg(2+): Asp14, Glu16, His172, and Asp177. The active-site Proton donor/acceptor is the His172.

This sequence belongs to the RNase T family. Homodimer. Mg(2+) serves as cofactor.

In terms of biological role, trims short 3' overhangs of a variety of RNA species, leaving a one or two nucleotide 3' overhang. Responsible for the end-turnover of tRNA: specifically removes the terminal AMP residue from uncharged tRNA (tRNA-C-C-A). Also appears to be involved in tRNA biosynthesis. This is Ribonuclease T from Pseudomonas putida (strain ATCC 47054 / DSM 6125 / CFBP 8728 / NCIMB 11950 / KT2440).